The sequence spans 631 residues: Arginine--tRNA ligase (631 aa).

The 'HIGH' region motif lies at 132-142 (PNIAKPLHVGH).

This sequence belongs to the class-I aminoacyl-tRNA synthetase family.

It is found in the cytoplasm. The enzyme catalyses tRNA(Arg) + L-arginine + ATP = L-arginyl-tRNA(Arg) + AMP + diphosphate. This Halobacterium salinarum (strain ATCC 700922 / JCM 11081 / NRC-1) (Halobacterium halobium) protein is Arginine--tRNA ligase.